The chain runs to 239 residues: Adapter protein MecA (239 aa).

Residues 118–128 (EQRTKEKEAQG) are compositionally biased toward basic and acidic residues. A disordered region spans residues 118-137 (EQRTKEKEAQGSKRQKSSAR).

Belongs to the MecA family. As to quaternary structure, homodimer.

In terms of biological role, enables the recognition and targeting of unfolded and aggregated proteins to the ClpC protease or to other proteins involved in proteolysis. The sequence is that of Adapter protein MecA from Staphylococcus aureus (strain USA300).